Reading from the N-terminus, the 306-residue chain is RNA-binding protein Raly (306 aa).

Position 2 is an N-acetylserine (Ser2). A Glycyl lysine isopeptide (Lys-Gly) (interchain with G-Cter in SUMO2) cross-link involves residue Lys4. Residues 21–92 (SRVFIGNLNT…QTLDINMAGE (72 aa)) enclose the RRM domain. Lys44 bears the N6-acetyllysine mark. Residue Ser63 is modified to Phosphoserine. Glycyl lysine isopeptide (Lys-Gly) (interchain with G-Cter in SUMO2) cross-links involve residues Lys94 and Lys99. Residues Ser106 and Ser135 each carry the phosphoserine modification. A Glycyl lysine isopeptide (Lys-Gly) (interchain with G-Cter in SUMO2) cross-link involves residue Lys159. At Lys165 the chain carries N6-acetyllysine; alternate. Lys165 participates in a covalent cross-link: Glycyl lysine isopeptide (Lys-Gly) (interchain with G-Cter in SUMO2); alternate. Glycyl lysine isopeptide (Lys-Gly) (interchain with G-Cter in SUMO2) cross-links involve residues Lys179 and Lys191. Positions 183–216 (KSSELQAIKTELTQIKSNIDALLSRLEQIAAEQK) form a coiled coil. The tract at residues 215-306 (QKANPDGKKK…DTDADDGALQ (92 aa)) is disordered. Residues 217–226 (ANPDGKKKGD) show a composition bias toward basic and acidic residues. Residues 227–252 (GGGAGGGGGGGGSGGGGSGGGGGGGS) show a composition bias toward gly residues. Residues 227–253 (GGGAGGGGGGGGSGGGGSGGGGGGGSS) are epitope (recognized by BKRF1 antibodies). Position 262 is a phosphothreonine (Thr262). The residue at position 264 (Ser264) is a Phosphoserine. Thr286 is modified (phosphothreonine). Basic and acidic residues predominate over residues 287 to 297 (HSEEELEHSQD). Phosphoserine is present on residues Ser288 and Ser295. A Phosphothreonine modification is found at Thr298.

This sequence belongs to the RRM HNRPC family. RALY subfamily. Identified in the spliceosome C complex. Interacts (through its RNA-binding domain) with FUS (through its RNA-binding domain); both are components of the same RNPs. Expressed in heart, brain, lung, liver, skeletal muscle, kidney and pancreas. Weakly expressed in placenta.

Its subcellular location is the nucleus. Its function is as follows. RNA-binding protein that acts as a transcriptional cofactor for cholesterol biosynthetic genes in the liver. Binds the lipid-responsive non-coding RNA LeXis and is required for LeXis-mediated effect on cholesterogenesis. May be a heterogeneous nuclear ribonucleoprotein (hnRNP). This Homo sapiens (Human) protein is RNA-binding protein Raly (RALY).